The sequence spans 96 residues: Conotoxin Mr15.1 (96 aa).

The N-terminal stretch at 1 to 20 (MSTLKMMLLILLLLLPLATF) is a signal peptide. The propeptide occupies 21–57 (DSDGQAIPGGGIPSAVNSRVGRLLGGDEKSGRSLEKR).

Belongs to the conotoxin N superfamily. Post-translationally, contains 4 disulfide bonds. In terms of tissue distribution, expressed by the venom duct.

The protein localises to the secreted. This Conus marmoreus (Marble cone) protein is Conotoxin Mr15.1.